The chain runs to 885 residues: DNA mismatch repair protein MutS (885 aa).

Residue 626–633 (GPNMGGKS) participates in ATP binding.

This sequence belongs to the DNA mismatch repair MutS family.

In terms of biological role, this protein is involved in the repair of mismatches in DNA. It is possible that it carries out the mismatch recognition step. This protein has a weak ATPase activity. This Burkholderia cenocepacia (strain ATCC BAA-245 / DSM 16553 / LMG 16656 / NCTC 13227 / J2315 / CF5610) (Burkholderia cepacia (strain J2315)) protein is DNA mismatch repair protein MutS.